The following is a 279-amino-acid chain: Homeobox protein BarH-like 2 (279 aa).

2 disordered regions span residues 110–137 (APGG…RRSR) and 194–279 (KGGQ…PPLS). The span at 118–128 (SSESETEQPTP) shows a compositional bias: polar residues. A DNA-binding region (homeobox) is located at residues 133–192 (PRRSRTIFTELQLMGLEKKFQKQKYLSTPDRLDLAQSLGLTQLQVKTWYQNRRMKWKKMV). Over residues 225 to 240 (NSQAQGQEQLEPSQGQ) the composition is skewed to polar residues. Pro residues predominate over residues 261-279 (PPDPPQELPIPSSEPPPLS).

Belongs to the BAR homeobox family. As to expression, highly expressed in adult salivary gland and at much lower levels in mammary gland, kidney and placenta.

It is found in the nucleus. Transcription factor. Binds optimally to the DNA consensus sequence 5'-YYTAATGRTTTTY-3'. May control the expression of neural adhesion molecules such as L1 or Ng-CAM during embryonic development of both the central and peripherical nervous system. May be involved in controlling adhesive processes in keratinizing epithelia. The sequence is that of Homeobox protein BarH-like 2 (BARX2) from Homo sapiens (Human).